Here is a 289-residue protein sequence, read N- to C-terminus: ATP synthase gamma chain (289 aa).

This sequence belongs to the ATPase gamma chain family. F-type ATPases have 2 components, CF(1) - the catalytic core - and CF(0) - the membrane proton channel. CF(1) has five subunits: alpha(3), beta(3), gamma(1), delta(1), epsilon(1). CF(0) has three main subunits: a, b and c.

It is found in the cell inner membrane. Functionally, produces ATP from ADP in the presence of a proton gradient across the membrane. The gamma chain is believed to be important in regulating ATPase activity and the flow of protons through the CF(0) complex. The polypeptide is ATP synthase gamma chain (Cereibacter sphaeroides (strain ATCC 17025 / ATH 2.4.3) (Rhodobacter sphaeroides)).